We begin with the raw amino-acid sequence, 233 residues long: Endonuclease V (233 aa).

Residues Asp-48 and Asp-116 each coordinate Mg(2+).

Belongs to the endonuclease V family. Requires Mg(2+) as cofactor.

It is found in the cytoplasm. The catalysed reaction is Endonucleolytic cleavage at apurinic or apyrimidinic sites to products with a 5'-phosphate.. DNA repair enzyme involved in the repair of deaminated bases. Selectively cleaves double-stranded DNA at the second phosphodiester bond 3' to a deoxyinosine leaving behind the intact lesion on the nicked DNA. The polypeptide is Endonuclease V (Streptomyces coelicolor (strain ATCC BAA-471 / A3(2) / M145)).